The sequence spans 820 residues: Nuclear pore complex protein Nup93 (820 aa).

The protein belongs to the nucleoporin interacting component (NIC) family.

Its subcellular location is the nucleus membrane. It localises to the nucleus. It is found in the nuclear pore complex. In terms of biological role, plays a role in the nuclear pore complex (NPC) assembly and/or maintenance. The sequence is that of Nuclear pore complex protein Nup93 (nup93) from Xenopus laevis (African clawed frog).